The chain runs to 126 residues: Holo-[acyl-carrier-protein] synthase (126 aa).

Residues aspartate 9 and glutamate 58 each contribute to the Mg(2+) site.

This sequence belongs to the P-Pant transferase superfamily. AcpS family. Mg(2+) serves as cofactor.

The protein resides in the cytoplasm. The catalysed reaction is apo-[ACP] + CoA = holo-[ACP] + adenosine 3',5'-bisphosphate + H(+). In terms of biological role, transfers the 4'-phosphopantetheine moiety from coenzyme A to a Ser of acyl-carrier-protein. In Buchnera aphidicola subsp. Cinara cedri (strain Cc), this protein is Holo-[acyl-carrier-protein] synthase.